A 279-amino-acid chain; its full sequence is Topoisomerase I damage affected protein 4 (279 aa).

The Extracellular portion of the chain corresponds to 1–32; sequence MNANSTTTAIGLTSPFEKLSFFPHSSNLILAH. Residues 33–53 form a helical membrane-spanning segment; the sequence is LHEIIFSFVFYQLAFSVVAPF. Residues 54 to 79 are Cytoplasmic-facing; that stretch reads LNKVVFRKHYTTIRDPLLKIDFNVHT. Residues 70–271 form the TLC domain; that stretch reads LLKIDFNVHT…MIRIAKKLAK (202 aa). A helical transmembrane segment spans residues 80–100; the sequence is VSMIQAVVSNTVLLPTLTTPM. The Extracellular segment spans residues 101–110; the sequence is HYNVVTYTDS. Residues 111 to 131 form a helical membrane-spanning segment; it reads YSSMVSSLSAGYFIWDLTMCV. Residues 132–135 are Cytoplasmic-facing; that stretch reads RYFK. A helical transmembrane segment spans residues 136–156; the sequence is LYGLEFTGHAIGSVYVMLLSL. The Extracellular portion of the chain corresponds to 157–162; sequence RPFCQP. Residues 163-183 form a helical membrane-spanning segment; the sequence is WIGRFLIYEASTPFVNINWFI. The Cytoplasmic portion of the chain corresponds to 184 to 192; the sequence is MQCNAKSKN. A helical membrane pass occupies residues 193 to 213; the sequence is SIPLWFNVVNGLLLMTVFFVV. Residues 214–238 are Extracellular-facing; sequence RICWGSIASALLFRQMWKVRDELPK. The helical transmembrane segment at 239-259 threads the bilayer; sequence FSAVTMMSLNIFMNLLNVLWF. Topologically, residues 260–279 are cytoplasmic; it reads KKMIRIAKKLAKPAPTSKLD.

The protein belongs to the TMEM56 family.

The protein localises to the membrane. The polypeptide is Topoisomerase I damage affected protein 4 (TDA4) (Saccharomyces cerevisiae (strain ATCC 204508 / S288c) (Baker's yeast)).